Here is a 150-residue protein sequence, read N- to C-terminus: D-aminoacyl-tRNA deacylase (150 aa).

A Gly-cisPro motif, important for rejection of L-amino acids motif is present at residues G138–P139.

It belongs to the DTD family. As to quaternary structure, homodimer.

It localises to the cytoplasm. It carries out the reaction glycyl-tRNA(Ala) + H2O = tRNA(Ala) + glycine + H(+). The enzyme catalyses a D-aminoacyl-tRNA + H2O = a tRNA + a D-alpha-amino acid + H(+). An aminoacyl-tRNA editing enzyme that deacylates mischarged D-aminoacyl-tRNAs. Also deacylates mischarged glycyl-tRNA(Ala), protecting cells against glycine mischarging by AlaRS. Acts via tRNA-based rather than protein-based catalysis; rejects L-amino acids rather than detecting D-amino acids in the active site. By recycling D-aminoacyl-tRNA to D-amino acids and free tRNA molecules, this enzyme counteracts the toxicity associated with the formation of D-aminoacyl-tRNA entities in vivo and helps enforce protein L-homochirality. The chain is D-aminoacyl-tRNA deacylase from Bacteroides thetaiotaomicron (strain ATCC 29148 / DSM 2079 / JCM 5827 / CCUG 10774 / NCTC 10582 / VPI-5482 / E50).